Consider the following 580-residue polypeptide: Proline--tRNA ligase (580 aa).

This sequence belongs to the class-II aminoacyl-tRNA synthetase family. ProS type 1 subfamily. As to quaternary structure, homodimer.

The protein localises to the cytoplasm. The enzyme catalyses tRNA(Pro) + L-proline + ATP = L-prolyl-tRNA(Pro) + AMP + diphosphate. Its function is as follows. Catalyzes the attachment of proline to tRNA(Pro) in a two-step reaction: proline is first activated by ATP to form Pro-AMP and then transferred to the acceptor end of tRNA(Pro). As ProRS can inadvertently accommodate and process non-cognate amino acids such as alanine and cysteine, to avoid such errors it has two additional distinct editing activities against alanine. One activity is designated as 'pretransfer' editing and involves the tRNA(Pro)-independent hydrolysis of activated Ala-AMP. The other activity is designated 'posttransfer' editing and involves deacylation of mischarged Ala-tRNA(Pro). The misacylated Cys-tRNA(Pro) is not edited by ProRS. The protein is Proline--tRNA ligase of Maridesulfovibrio salexigens (strain ATCC 14822 / DSM 2638 / NCIMB 8403 / VKM B-1763) (Desulfovibrio salexigens).